Consider the following 837-residue polypeptide: Cap-specific mRNA (nucleoside-2'-O-)-methyltransferase 1 (837 aa).

The tract at residues M1–F66 is disordered. The Bipartite nuclear localization signal motif lies at K2–R18. Phosphoserine occurs at positions 27, 30, and 52. Over residues T56 to F66 the composition is skewed to basic and acidic residues. Residues Y86–Q132 form the G-patch domain. The residue at position 90 (S90) is a Phosphoserine. At K107 the chain carries N6-acetyllysine. Residues K202–D206 and R217 each bind substrate. The RrmJ-type SAM-dependent 2'-O-MTase domain occupies F230–K449. Residue N233 participates in S-adenosyl-L-methionine binding. Residue K238 is part of the active site. S-adenosyl-L-methionine-binding positions include C276 to F282 and D334 to I335. The active site involves D363. Position 373 to 375 (N373 to Q375) interacts with substrate. K403 serves as the catalytic Proton acceptor. N438 contributes to the substrate binding site. Residues S726 to P834 are interaction with POLR2A. A WW domain is found at R751–E785.

Interacts with POLR2A (via C-terminus).

It localises to the nucleus. The catalysed reaction is a 5'-end (N(7)-methyl 5'-triphosphoguanosine)-ribonucleoside in mRNA + S-adenosyl-L-methionine = a 5'-end (N(7)-methyl 5'-triphosphoguanosine)-(2'-O-methyl-ribonucleoside) in mRNA + S-adenosyl-L-homocysteine + H(+). Its function is as follows. S-adenosyl-L-methionine-dependent methyltransferase that mediates mRNA cap1 2'-O-ribose methylation to the 5'-cap structure of mRNAs. Methylates the ribose of the first nucleotide of a m(7)GpppG-capped mRNA and small nuclear RNA (snRNA) to produce m(7)GpppRm (cap1). Displays a preference for cap0 transcripts. Cap1 modification is linked to higher levels of translation. May be involved in the interferon response pathway. This chain is Cap-specific mRNA (nucleoside-2'-O-)-methyltransferase 1 (Cmtr1), found in Mus musculus (Mouse).